The following is a 966-amino-acid chain: Mitogen-activated protein kinase kinase kinase 13 (966 aa).

Disordered stretches follow at residues 1–22 (MANF…SESK), 30–49 (ELTA…QQEK), and 90–114 (HDES…SGTE). A compositionally biased stretch (polar residues) spans 95–113 (TAVSQGNSNTVDGESTSGT). A Protein kinase domain is found at 168-409 (ISELQWLGSG…FRQTLMHLDI (242 aa)). ATP contacts are provided by residues 174-182 (LGSGAQGAV) and Lys195. Residue Asp279 is the Proton acceptor of the active site. Leucine-zipper regions lie at residues 433-454 (VKKH…DEEL) and 486-507 (LSAI…EQAV). 4 disordered regions span residues 534-599 (KRKG…RGSH), 611-655 (AQEN…HHPR), 744-834 (DIPS…RRQR), and 846-908 (STFS…GLSD). Residues 567–581 (SPLSGSPKMSTSSSK) show a composition bias toward low complexity. Positions 582 to 594 (SRYRSKPRHRRGN) are enriched in basic residues. 2 stretches are compositionally biased toward polar residues: residues 611-629 (AQEN…SQYP) and 785-795 (RSESSLGTSHL). A compositionally biased stretch (acidic residues) spans 814 to 827 (DSSEEEEGEVDSEV). An acidic region spans residues 815-828 (SSEEEEGEVDSEVE). A compositionally biased stretch (polar residues) spans 846–855 (STFSSENFSV). The span at 873–887 (LADKLEDRLAEKLDD) shows a compositional bias: basic and acidic residues.

It belongs to the protein kinase superfamily. STE Ser/Thr protein kinase family. MAP kinase kinase kinase subfamily. Homodimer; forms dimers through the leucine-zipper motif. Interacts with the C-terminus of MAPK8IP1 through the kinase catalytic domain. Binds PRDX3. Associates with the IKK complex through the kinase domain. Requires Mg(2+) as cofactor. Post-translationally, autophosphorylated on serine and threonine residues. In terms of tissue distribution, expressed in the adult brain, liver, placenta and pancreas, with expression strongest in the pancreas.

It is found in the cytoplasm. It localises to the membrane. The enzyme catalyses L-seryl-[protein] + ATP = O-phospho-L-seryl-[protein] + ADP + H(+). It carries out the reaction L-threonyl-[protein] + ATP = O-phospho-L-threonyl-[protein] + ADP + H(+). Its activity is regulated as follows. Activated by autophosphorylation and homodimerization. In terms of biological role, activates the JUN N-terminal pathway through activation of the MAP kinase kinase MAP2K7. Acts synergistically with PRDX3 to regulate the activation of NF-kappa-B in the cytosol. This activation is kinase-dependent and involves activating the IKK complex, the IKBKB-containing complex that phosphorylates inhibitors of NF-kappa-B. This is Mitogen-activated protein kinase kinase kinase 13 from Homo sapiens (Human).